We begin with the raw amino-acid sequence, 293 residues long: Ribosomal protein L11 methyltransferase (293 aa).

The S-adenosyl-L-methionine site is built by threonine 145, glycine 166, aspartate 188, and asparagine 230.

Belongs to the methyltransferase superfamily. PrmA family.

It is found in the cytoplasm. It carries out the reaction L-lysyl-[protein] + 3 S-adenosyl-L-methionine = N(6),N(6),N(6)-trimethyl-L-lysyl-[protein] + 3 S-adenosyl-L-homocysteine + 3 H(+). Its function is as follows. Methylates ribosomal protein L11. This Shewanella denitrificans (strain OS217 / ATCC BAA-1090 / DSM 15013) protein is Ribosomal protein L11 methyltransferase.